The sequence spans 398 residues: Thyrotropin-releasing hormone receptor (398 aa).

The Extracellular portion of the chain corresponds to 1–28 (MENETVSELNQTQLQPRAVVALEYQVVT). N-linked (GlcNAc...) asparagine glycans are attached at residues N3 and N10. A helical transmembrane segment spans residues 29–51 (ILLVLIICGLGIVGNIMVVLVVM). At 52–61 (RTKHMRTPTN) the chain is on the cytoplasmic side. A helical membrane pass occupies residues 62 to 83 (CYLVSLAVADLMVLVAAGLPNI). The Extracellular portion of the chain corresponds to 84–99 (TDSIYGSWVYGYVGCL). C98 and C179 are joined by a disulfide. The chain crosses the membrane as a helical span at residues 100 to 121 (CITYLQYLGINASSCSITAFTI). Over 122–144 (ERYIAICHPIKAQFLCTFSRAKK) the chain is Cytoplasmic. The chain crosses the membrane as a helical span at residues 145–168 (IIIFVWAFTSLYCMLWFFLLDLNI). The Extracellular segment spans residues 169–193 (STYKDAIVISCGYKISRNYYSPIYL). Residues 194 to 215 (MDFGVFYVVPMILATVLYGFIA) traverse the membrane as a helical segment. Residues 216-266 (RILFLNPIPSDPKENSKTWKNDSTHQNTNLNVNTSNRCFNSTVSSRKQVTK) lie on the Cytoplasmic side of the membrane. A helical membrane pass occupies residues 267 to 288 (MLAVVVILFALLWMPYRTLVVV). Over 289-296 (NSFLSSPF) the chain is Extracellular. A helical membrane pass occupies residues 297-319 (QENWFLLFCRICIYLNSAINPVI). The Cytoplasmic segment spans residues 320 to 398 (YNLMSQKFRA…LASEVSFSQS (79 aa)).

This sequence belongs to the G-protein coupled receptor 1 family.

The protein localises to the cell membrane. In terms of biological role, receptor for thyrotropin-releasing hormone (TRH). Upon ligand binding, this G-protein-coupled receptor triggers activation of the phosphatidylinositol (IP3)-calcium-protein kinase C (PKC) pathway. This is Thyrotropin-releasing hormone receptor (TRHR) from Homo sapiens (Human).